The chain runs to 393 residues: NAD(P)H-quinone oxidoreductase subunit H, chloroplastic (393 aa).

The protein belongs to the complex I 49 kDa subunit family. NDH is composed of at least 16 different subunits, 5 of which are encoded in the nucleus.

It is found in the plastid. The protein resides in the chloroplast thylakoid membrane. The enzyme catalyses a plastoquinone + NADH + (n+1) H(+)(in) = a plastoquinol + NAD(+) + n H(+)(out). It carries out the reaction a plastoquinone + NADPH + (n+1) H(+)(in) = a plastoquinol + NADP(+) + n H(+)(out). In terms of biological role, NDH shuttles electrons from NAD(P)H:plastoquinone, via FMN and iron-sulfur (Fe-S) centers, to quinones in the photosynthetic chain and possibly in a chloroplast respiratory chain. The immediate electron acceptor for the enzyme in this species is believed to be plastoquinone. Couples the redox reaction to proton translocation, and thus conserves the redox energy in a proton gradient. In Nuphar advena (Common spatterdock), this protein is NAD(P)H-quinone oxidoreductase subunit H, chloroplastic.